Consider the following 383-residue polypeptide: Na(+)/H(+) antiporter (383 aa).

Helical transmembrane passes span 1–21 (MEFI…SHIS), 24–44 (FGIP…QAGL), 51–71 (ILVH…AGLE), 83–103 (PGMF…WLTG), 112–132 (EAIF…VEVL), 145–165 (TILG…SFSL), 186–206 (LFYF…LMSL), 216–236 (IIIM…LIGL), 262–282 (VEAL…GLEV), 291–311 (ILFI…GGYI), 323–343 (ALMV…ILQI), and 353–373 (HYYS…PLIL).

The protein belongs to the monovalent cation:proton antiporter 2 (CPA2) transporter (TC 2.A.37) family.

The protein resides in the cell membrane. In terms of biological role, na(+)/H(+) antiporter that extrudes sodium in exchange for external protons. Can also transport lithium. This is Na(+)/H(+) antiporter (napA) from Enterococcus hirae.